The chain runs to 167 residues: E1B protein, small T-antigen (167 aa).

Residues 143–167 (GLDPVQEEEEEEENLRAGLDPSTEL) form a disordered region.

Belongs to the adenoviridae E1B 19 kDa protein family.

The protein localises to the host cell membrane. The protein resides in the host nucleus envelope. It is found in the host nucleus lamina. Its function is as follows. Putative adenovirus Bcl-2 homolog that inhibits apoptosis induced by TNF or FAS pathways, as well as p53-mediated apoptosis. Without E1B 19K function, virus production is compromised because of premature death of host cell. Interacts with Bax protein in cell lysates. In Human adenovirus F serotype 40 (HAdV-40), this protein is E1B protein, small T-antigen.